The chain runs to 195 residues: Probable GTP-binding protein EngB (195 aa).

Residues 22-194 form the EngB-type G domain; sequence LKGEVAFVGR…LDLISTLLKE (173 aa). Residues 30–37, 56–60, 74–77, 141–144, and 173–175 each bind GTP; these read GRSNVGKS, GKTRS, DLPG, TKMD, and TSS. Residues Ser37 and Thr58 each coordinate Mg(2+).

It belongs to the TRAFAC class TrmE-Era-EngA-EngB-Septin-like GTPase superfamily. EngB GTPase family. Requires Mg(2+) as cofactor.

Necessary for normal cell division and for the maintenance of normal septation. This Thermotoga sp. (strain RQ2) protein is Probable GTP-binding protein EngB.